We begin with the raw amino-acid sequence, 507 residues long: 2,3-bisphosphoglycerate-independent phosphoglycerate mutase (507 aa).

2 residues coordinate Mn(2+): aspartate 11 and serine 61. The active-site Phosphoserine intermediate is serine 61. Residues histidine 122, 152–153 (RD), arginine 183, arginine 189, 258–261 (RNDR), and lysine 332 contribute to the substrate site. Positions 399, 403, 440, 441, and 458 each coordinate Mn(2+).

It belongs to the BPG-independent phosphoglycerate mutase family. Monomer. Mn(2+) is required as a cofactor.

The catalysed reaction is (2R)-2-phosphoglycerate = (2R)-3-phosphoglycerate. Its pathway is carbohydrate degradation; glycolysis; pyruvate from D-glyceraldehyde 3-phosphate: step 3/5. Its function is as follows. Catalyzes the interconversion of 2-phosphoglycerate and 3-phosphoglycerate. The sequence is that of 2,3-bisphosphoglycerate-independent phosphoglycerate mutase from Parabacteroides distasonis (strain ATCC 8503 / DSM 20701 / CIP 104284 / JCM 5825 / NCTC 11152).